The sequence spans 115 residues: Protein Wnt-2 (115 aa).

The O-palmitoleoyl serine; by PORCN moiety is linked to residue Ser-1. Residues Cys-81 and Cys-96 are joined by a disulfide bond. Residue Asn-82 is glycosylated (N-linked (GlcNAc...) asparagine).

Belongs to the Wnt family. Palmitoleoylation is required for efficient binding to frizzled receptors. Depalmitoleoylation leads to Wnt signaling pathway inhibition.

The protein resides in the secreted. It is found in the extracellular space. Its subcellular location is the extracellular matrix. Ligand for members of the frizzled family of seven transmembrane receptors. Probable developmental protein. May be a signaling molecule which affects the development of discrete regions of tissues. Is likely to signal over only few cell diameters. This Strongylocentrotus purpuratus (Purple sea urchin) protein is Protein Wnt-2 (WNT-2).